The sequence spans 260 residues: CD40 ligand (260 aa).

The Cytoplasmic segment spans residues 1–22; it reads MIETYSQTAPRSVAPGPPVSMK. A helical; Signal-anchor for type II membrane protein transmembrane segment spans residues 23–46; it reads IFMYLLTVFLITQMIGSALFAVYL. Topologically, residues 47-260 are extracellular; that stretch reads HRRLDKIEDE…GFTSFGLLKL (214 aa). Residues 121–260 enclose the THD domain; that stretch reads VAAHVISEAS…GFTSFGLLKL (140 aa). A disulfide bond links Cys-177 and Cys-217. An N-linked (GlcNAc...) asparagine glycan is attached at Asn-239.

The protein belongs to the tumor necrosis factor family. Homotrimer. Interacts with CD28. CD40 ligand, soluble form: Exists as either a monomer or a homotrimer. Forms a ternary complex between CD40 and integrins for CD40-CD40LG signaling. Post-translationally, the soluble form derives from the membrane form by proteolytic processing.

Its subcellular location is the cell membrane. The protein localises to the cell surface. It is found in the secreted. Cytokine that acts as a ligand to CD40/TNFRSF5. Costimulates T-cell proliferation and cytokine production. Its cross-linking on T-cells generates a costimulatory signal which enhances the production of IL4 and IL10 in conjunction with the TCR/CD3 ligation and CD28 costimulation. Induces the activation of NF-kappa-B. Induces the activation of kinases MAPK8 and PAK2 in T-cells. Mediates B-cell proliferation in the absence of co-stimulus as well as IgE production in the presence of IL4. Involved in immunoglobulin class switching. In terms of biological role, acts as a ligand for integrins, specifically ITGA5:ITGB1 and ITGAV:ITGB3; both integrins and the CD40 receptor are required for activation of CD40-CD40LG signaling, which have cell-type dependent effects, such as B-cell activation, NF-kappa-B signaling and anti-apoptotic signaling. The protein is CD40 ligand (CD40LG) of Felis catus (Cat).